A 1295-amino-acid chain; its full sequence is Nonribosomal peptide synthetase resC (1295 aa).

A disordered region spans residues 1–24 (MDLTTTSHARVDSGGVPFTSSLND). The adenylation stretch occupies residues 221 to 624 (KDVVDASPQA…EGRKDTQIKL (404 aa)). Residues 759-836 (ESANPAEENL…DQANLLRPLV (78 aa)) form the Carrier domain. The residue at position 796 (S796) is an O-(pantetheine 4'-phosphoryl)serine. The interval 873-1284 (EDVYPCTPYQ…DEYSQTLHEL (412 aa)) is condensation.

This sequence belongs to the NRP synthetase family. The cofactor is pantetheine 4'-phosphate.

The catalysed reaction is restrictinol + glycine + H(+) = restricticin + H2O. Its pathway is antifungal biosynthesis. Its function is as follows. Nonribosomal peptide synthetase; part of the gene cluster that mediates the biosynthesis of the tetrahydropyranyl antifungal agent restricticin that acts as an inhibitor of CYP51 and blocks the ergosterol biosynthesis. Within the pathway, resC catalyzes the C3 esterification of restrictinol with glycine to yield restricticin. ResC represents an example of the emerging class of single-module NRPS-like enzymes that perform esterification reactions. The highly reducing polyketide synthase resH, the short chain dehydrogenase resG, the cyclase resF, the FAD-dependent monooxygenase resA and the enoylreductase resD are required to generate the first stable intermediate desmethylrestrictinol. ResH with resD biosynthesize the first polyketide chain intermediate that is reduced by resG, followed by epoxidation by resA before 6-endo cyclization via epoxide opening by resF leads to desmethylrestrictinol. The methyltransferase resE then catalyzes the C4 O-methylation of desmethylrestrictinol to produce restrictinol, and the nonribosomal peptide synthetase resC catalyzes the C3 esterification of restrictinol with glycine that leads to restricticin. The polypeptide is Nonribosomal peptide synthetase resC (Aspergillus sclerotiorum).